The sequence spans 607 residues: UvrABC system protein C (607 aa).

Residues 16–94 enclose the GIY-YIG domain; that stretch reads GRPGVYRMFD…IKEWRPPYNI (79 aa). The UVR domain maps to 203-238; the sequence is HALTNELSTAMEEAAINLEFERAAELRDQIALLRRV.

It belongs to the UvrC family. Interacts with UvrB in an incision complex.

The protein localises to the cytoplasm. Its function is as follows. The UvrABC repair system catalyzes the recognition and processing of DNA lesions. UvrC both incises the 5' and 3' sides of the lesion. The N-terminal half is responsible for the 3' incision and the C-terminal half is responsible for the 5' incision. The protein is UvrABC system protein C of Pseudomonas fluorescens (strain Pf0-1).